The chain runs to 441 residues: D-inositol 3-phosphate glycosyltransferase (441 aa).

His38 contacts 1D-myo-inositol 3-phosphate. Residues 44-45 (QP) and Gly52 contribute to the UDP-N-acetyl-alpha-D-glucosamine site. 1D-myo-inositol 3-phosphate contacts are provided by residues 49 to 54 (DAGGMN), Lys107, Tyr140, Thr164, and Arg184. Arg258, Lys263, and Gln316 together coordinate UDP-N-acetyl-alpha-D-glucosamine. Residues Phe325, Gln326, and Ala328 each contribute to the Mg(2+) site. UDP-N-acetyl-alpha-D-glucosamine contacts are provided by Glu338 and Glu346. Residue Thr352 coordinates Mg(2+).

The protein belongs to the glycosyltransferase group 1 family. MshA subfamily. As to quaternary structure, homodimer.

The enzyme catalyses 1D-myo-inositol 3-phosphate + UDP-N-acetyl-alpha-D-glucosamine = 1D-myo-inositol 2-acetamido-2-deoxy-alpha-D-glucopyranoside 3-phosphate + UDP + H(+). Functionally, catalyzes the transfer of a N-acetyl-glucosamine moiety to 1D-myo-inositol 3-phosphate to produce 1D-myo-inositol 2-acetamido-2-deoxy-glucopyranoside 3-phosphate in the mycothiol biosynthesis pathway. The polypeptide is D-inositol 3-phosphate glycosyltransferase (Mycolicibacterium paratuberculosis (strain ATCC BAA-968 / K-10) (Mycobacterium paratuberculosis)).